Here is a 174-residue protein sequence, read N- to C-terminus: Disulfide bond formation protein B (174 aa).

At 1 to 12 the chain is on the cytoplasmic side; that stretch reads MLNWIDTAPRRI. Residues 13 to 29 traverse the membrane as a helical segment; sequence LALISAACVAMLAFGMY. The Periplasmic segment spans residues 30 to 47; it reads LQHVVGLEPCPMCIVQRY. Cys39 and Cys42 are joined by a disulfide. The chain crosses the membrane as a helical span at residues 48 to 64; it reads ALIGVAVFAGLASARGQ. The Cytoplasmic portion of the chain corresponds to 65 to 69; it reads KGWWM. Residues 70–87 form a helical membrane-spanning segment; that stretch reads TWSVLALVAAGFGAFVAA. Residues 88-143 lie on the Periplasmic side of the membrane; sequence RQSWLQWYPPEIATCGRDFYGMIENYPISRAIPMIFRGSGDCTAVDWTFLGGSIAN. A disulfide bridge links Cys102 with Cys129. A helical transmembrane segment spans residues 144–162; sequence WSFVWFLLFAVLLLVLLVR. Topologically, residues 163-174 are cytoplasmic; it reads GGRGAPDTLARA.

Belongs to the DsbB family.

The protein resides in the cell inner membrane. Its function is as follows. Required for disulfide bond formation in some periplasmic proteins. Acts by oxidizing the DsbA protein. This Acidovorax sp. (strain JS42) protein is Disulfide bond formation protein B.